A 1353-amino-acid polypeptide reads, in one-letter code: Adenylate cyclase type 9 (1353 aa).

Disordered stretches follow at residues 1-27 (MASS…DSNS) and 51-73 (SSSC…GGRL). Residues 1–117 (MASSPHQQLL…CFPQTQRRFR (117 aa)) are Cytoplasmic-facing. Residues 16–27 (EVSCDSSGDSNS) are compositionally biased toward polar residues. Positions 51–66 (SSSCSSSGDSGGLPRR) are enriched in low complexity. Residues 118–138 (YALFYVGFACLLWSIYFAVHM) form a helical membrane-spanning segment. The Extracellular portion of the chain corresponds to 139-141 (KSK). Residues 142–162 (VIVMVVPALCFLVVCVGFFLF) traverse the membrane as a helical segment. The Cytoplasmic portion of the chain corresponds to 163–171 (TFTKLYARH). The chain crosses the membrane as a helical span at residues 172 to 192 (YAWTSLALTLLVFALTLAAQF). Residues 193-215 (QVWTPLSGRVDSSNHTLTATPAD) lie on the Extracellular side of the membrane. Residue asparagine 206 is glycosylated (N-linked (GlcNAc...) asparagine). A helical transmembrane segment spans residues 216–235 (TCLSQVGSFSICIEVLLLLY). Topologically, residues 236–241 (TVMQLP) are cytoplasmic. Residues 242–259 (LYLSLFLGVVYSVLFETF) traverse the membrane as a helical segment. At 260-280 (GYHFRNEDCYPSPGPGALHWE) the chain is on the extracellular side. The helical transmembrane segment at 281–301 (LLSRALLHVCIHAIGIHLFVM) threads the bilayer. The Cytoplasmic segment spans residues 302–786 (SQVRSRSTFL…VKTFASATFS (485 aa)). A disordered region spans residues 349-375 (QGDEESENSVKRHATSSPKNRKKKSSI). A compositionally biased stretch (basic residues) spans 359 to 374 (KRHATSSPKNRKKKSS). The Mg(2+) site is built by aspartate 399, isoleucine 400, and aspartate 443. Residues 399–404 (DIVGFT), 441–443 (LGD), and arginine 487 contribute to the ATP site. Disordered stretches follow at residues 596 to 615 (DSRE…GSVS) and 641 to 685 (SEAG…EEKL). Serine 610 and serine 613 each carry phosphoserine. Residues 661–676 (STKASGGPNSKTQNGL) are compositionally biased toward polar residues. Phosphoserine is present on residues serine 688, serine 691, and serine 706. A helical transmembrane segment spans residues 787-807 (SLLDVFLSTTVFLILSITCFL). Topologically, residues 808–818 (KYGATATPPPP) are extracellular. Residues 819-839 (AALAVFGADLLLEVLSLIVSI) traverse the membrane as a helical segment. The Cytoplasmic segment spans residues 840–867 (RMVFFLEDVMTCTKWLLEWIAGWLPRHC). A helical transmembrane segment spans residues 868–888 (IGAILVSLPALAVYSHITSEF). Residues 889 to 891 (ETN) lie on the Extracellular side of the membrane. Residues 892 to 912 (IHVTMFTGSAVLVAVVHYCNF) traverse the membrane as a helical segment. Residues 913 to 920 (CQLSSWMR) lie on the Cytoplasmic side of the membrane. Residues 921–941 (SSLATIVGAGLLLLLHISLCQ) form a helical membrane-spanning segment. Residues 942–975 (DSSIVMSPLDSAQNFSAQRNPCNSSVLQDGRRPA) lie on the Extracellular side of the membrane. 2 N-linked (GlcNAc...) asparagine glycosylation sites follow: asparagine 955 and asparagine 964. The chain crosses the membrane as a helical span at residues 976-996 (SLIGKELILTFFLLLLLVWFL). The Cytoplasmic segment spans residues 997-1353 (NREFEVSYRL…LSKLNVSKSV (357 aa)). Residues lysine 1108, 1185–1187 (DIW), 1192–1196 (NIASR), and lysine 1232 contribute to the ATP site. Serine 1257, serine 1259, serine 1295, serine 1307, and serine 1332 each carry phosphoserine. A disordered region spans residues 1290–1314 (KASLGSDDSTQAKEARLSSKRSWRE). Basic and acidic residues predominate over residues 1299–1314 (TQAKEARLSSKRSWRE).

This sequence belongs to the adenylyl cyclase class-4/guanylyl cyclase family. It depends on Mg(2+) as a cofactor. Mn(2+) is required as a cofactor. Detected in brain, spleen, lung, liver and testis (at protein level). Detected in brain, especially in hippocampus, cerebellum and neocortex. Found in decreasing order in skeletal muscle, heart, adrenal gland, ovary and brain; and to a lesser extent, in kidney, liver, testis, lung, thymus and spleen.

It localises to the cell membrane. The catalysed reaction is ATP = 3',5'-cyclic AMP + diphosphate. Insensitive to calcium/calmodulin, forskolin and somatostatin. Stimulated by beta-adrenergic receptor activation. Activity is down-regulated by calcium/calcineurin. Adenylyl cyclase that catalyzes the formation of the signaling molecule cAMP in response to activation of G protein-coupled receptors. Contributes to signaling cascades activated by CRH (corticotropin-releasing factor), corticosteroids and by beta-adrenergic receptors. The chain is Adenylate cyclase type 9 (Adcy9) from Mus musculus (Mouse).